The following is a 283-amino-acid chain: Bifunctional protein FolD (283 aa).

NADP(+) is bound by residues 163–165 (GRS), Ser-188, and Ile-229.

Belongs to the tetrahydrofolate dehydrogenase/cyclohydrolase family. In terms of assembly, homodimer.

It carries out the reaction (6R)-5,10-methylene-5,6,7,8-tetrahydrofolate + NADP(+) = (6R)-5,10-methenyltetrahydrofolate + NADPH. The catalysed reaction is (6R)-5,10-methenyltetrahydrofolate + H2O = (6R)-10-formyltetrahydrofolate + H(+). It functions in the pathway one-carbon metabolism; tetrahydrofolate interconversion. Catalyzes the oxidation of 5,10-methylenetetrahydrofolate to 5,10-methenyltetrahydrofolate and then the hydrolysis of 5,10-methenyltetrahydrofolate to 10-formyltetrahydrofolate. This chain is Bifunctional protein FolD, found in Campylobacter fetus subsp. fetus (strain 82-40).